Reading from the N-terminus, the 358-residue chain is 3-dehydroquinate synthase (358 aa).

Residues 72-77 (GGERVK), 106-110 (GALLD), 130-131 (ST), lysine 143, and lysine 151 contribute to the NAD(+) site. Residues glutamate 184, histidine 245, and histidine 261 each contribute to the Zn(2+) site.

The protein belongs to the sugar phosphate cyclases superfamily. Dehydroquinate synthase family. It depends on NAD(+) as a cofactor. Co(2+) serves as cofactor. The cofactor is Zn(2+).

The protein resides in the cytoplasm. The catalysed reaction is 7-phospho-2-dehydro-3-deoxy-D-arabino-heptonate = 3-dehydroquinate + phosphate. The protein operates within metabolic intermediate biosynthesis; chorismate biosynthesis; chorismate from D-erythrose 4-phosphate and phosphoenolpyruvate: step 2/7. In terms of biological role, catalyzes the conversion of 3-deoxy-D-arabino-heptulosonate 7-phosphate (DAHP) to dehydroquinate (DHQ). In Aeropyrum pernix (strain ATCC 700893 / DSM 11879 / JCM 9820 / NBRC 100138 / K1), this protein is 3-dehydroquinate synthase (aroB).